Reading from the N-terminus, the 461-residue chain is 3-deoxy-D-manno-octulosonic acid transferase (461 aa).

The chain crosses the membrane as a helical; Signal-anchor span at residues 2–22 (MLLYYTLSFILLPVYFIIIFI). Residues 47–88 (SALDFIQMSVNKEGFTDHKTTSYVDMHRNASLMYKLSLERSY) enclose the RPE1 insert domain. Glu102 serves as the catalytic Proton acceptor. CMP contacts are provided by residues 306–307 (PR), 347–349 (FGE), and 372–375 (NILE).

Belongs to the glycosyltransferase group 1 family. Glycosyltransferase 30 subfamily.

Its subcellular location is the cell inner membrane. The catalysed reaction is lipid IVA (E. coli) + CMP-3-deoxy-beta-D-manno-octulosonate = alpha-Kdo-(2-&gt;6)-lipid IVA (E. coli) + CMP + H(+). The protein operates within bacterial outer membrane biogenesis; LPS core biosynthesis. Involved in lipopolysaccharide (LPS) biosynthesis. Catalyzes the transfer of 3-deoxy-D-manno-octulosonate (Kdo) residue(s) from CMP-Kdo to lipid IV(A), the tetraacyldisaccharide-1,4'-bisphosphate precursor of lipid A. This is 3-deoxy-D-manno-octulosonic acid transferase (waaA) from Rickettsia prowazekii (strain Madrid E).